The chain runs to 529 residues: Putative UPF0481 protein At3g02645 (529 aa).

N-linked (GlcNAc...) asparagine glycosylation is found at Asn-365 and Asn-403. A helical transmembrane segment spans residues 498–518 (ILAFLAAVLLLMLVSLQLFSL).

It belongs to the UPF0481 family.

It is found in the membrane. The chain is Putative UPF0481 protein At3g02645 from Arabidopsis thaliana (Mouse-ear cress).